Reading from the N-terminus, the 101-residue chain is uncharacterized protein (101 aa).

This is an uncharacterized protein from Shigella flexneri.